Reading from the N-terminus, the 78-residue chain is Small ribosomal subunit protein eS17 (78 aa).

This sequence belongs to the eukaryotic ribosomal protein eS17 family.

The polypeptide is Small ribosomal subunit protein eS17 (Sulfurisphaera tokodaii (strain DSM 16993 / JCM 10545 / NBRC 100140 / 7) (Sulfolobus tokodaii)).